A 59-amino-acid chain; its full sequence is UPF0434 protein Shew185_1670 (59 aa).

The protein belongs to the UPF0434 family.

This chain is UPF0434 protein Shew185_1670, found in Shewanella baltica (strain OS185).